The sequence spans 405 residues: Bifunctional enzyme IspD/IspF (405 aa).

The interval Met-1–Arg-240 is 2-C-methyl-D-erythritol 4-phosphate cytidylyltransferase. Residues Arg-240 to Asn-405 form a 2-C-methyl-D-erythritol 2,4-cyclodiphosphate synthase region. The a divalent metal cation site is built by Asp-246 and His-248. 4-CDP-2-C-methyl-D-erythritol 2-phosphate contacts are provided by residues Asp-246–His-248 and His-277–Ser-278. Position 285 (His-285) interacts with a divalent metal cation. Residues Asp-299–Gly-301, Thr-375–Glu-378, and Arg-385 contribute to the 4-CDP-2-C-methyl-D-erythritol 2-phosphate site.

The protein in the N-terminal section; belongs to the IspD/TarI cytidylyltransferase family. IspD subfamily. It in the C-terminal section; belongs to the IspF family. The cofactor is a divalent metal cation.

The enzyme catalyses 2-C-methyl-D-erythritol 4-phosphate + CTP + H(+) = 4-CDP-2-C-methyl-D-erythritol + diphosphate. It catalyses the reaction 4-CDP-2-C-methyl-D-erythritol 2-phosphate = 2-C-methyl-D-erythritol 2,4-cyclic diphosphate + CMP. It functions in the pathway isoprenoid biosynthesis; isopentenyl diphosphate biosynthesis via DXP pathway; isopentenyl diphosphate from 1-deoxy-D-xylulose 5-phosphate: step 2/6. Its pathway is isoprenoid biosynthesis; isopentenyl diphosphate biosynthesis via DXP pathway; isopentenyl diphosphate from 1-deoxy-D-xylulose 5-phosphate: step 4/6. Its function is as follows. Bifunctional enzyme that catalyzes the formation of 4-diphosphocytidyl-2-C-methyl-D-erythritol from CTP and 2-C-methyl-D-erythritol 4-phosphate (MEP) (IspD), and catalyzes the conversion of 4-diphosphocytidyl-2-C-methyl-D-erythritol 2-phosphate (CDP-ME2P) to 2-C-methyl-D-erythritol 2,4-cyclodiphosphate (ME-CPP) with a corresponding release of cytidine 5-monophosphate (CMP) (IspF). This is Bifunctional enzyme IspD/IspF from Wolbachia sp. subsp. Brugia malayi (strain TRS).